We begin with the raw amino-acid sequence, 235 residues long: 7-cyano-7-deazaguanine synthase (235 aa).

Residue 16 to 26 (FSGGQDSTTCL) participates in ATP binding. The Zn(2+) site is built by Cys-195, Cys-204, Cys-207, and Cys-210.

The protein belongs to the QueC family. The cofactor is Zn(2+).

The catalysed reaction is 7-carboxy-7-deazaguanine + NH4(+) + ATP = 7-cyano-7-deazaguanine + ADP + phosphate + H2O + H(+). It functions in the pathway purine metabolism; 7-cyano-7-deazaguanine biosynthesis. Its function is as follows. Catalyzes the ATP-dependent conversion of 7-carboxy-7-deazaguanine (CDG) to 7-cyano-7-deazaguanine (preQ(0)). The chain is 7-cyano-7-deazaguanine synthase from Shewanella frigidimarina (strain NCIMB 400).